A 158-amino-acid chain; its full sequence is Cyclic pyranopterin monophosphate synthase (158 aa).

Residues 73-75 (LCH) and 110-111 (ME) contribute to the substrate site. D125 is a catalytic residue.

It belongs to the MoaC family. As to quaternary structure, homohexamer; trimer of dimers.

It carries out the reaction (8S)-3',8-cyclo-7,8-dihydroguanosine 5'-triphosphate = cyclic pyranopterin phosphate + diphosphate. The protein operates within cofactor biosynthesis; molybdopterin biosynthesis. Functionally, catalyzes the conversion of (8S)-3',8-cyclo-7,8-dihydroguanosine 5'-triphosphate to cyclic pyranopterin monophosphate (cPMP). The protein is Cyclic pyranopterin monophosphate synthase of Azotobacter vinelandii (strain DJ / ATCC BAA-1303).